The chain runs to 222 residues: Cytochrome b6 (222 aa).

Residues 39–59 form a helical membrane-spanning segment; it reads IFYCLGGITLVCFLVQFATGF. A heme c-binding site is contributed by Cys42. Positions 93 and 107 each coordinate heme b. Helical transmembrane passes span 97–117, 123–143, and 193–213; these read ASMMVLMMILHVFRVYLTGGF, LTWMTGVILAVITVSFGVTGY, and LHTFVFPWLIAVFMLAHFLMI. Heme b is bound by residues His194 and His209.

The protein belongs to the cytochrome b family. PetB subfamily. In terms of assembly, the 4 large subunits of the cytochrome b6-f complex are cytochrome b6, subunit IV (17 kDa polypeptide, PetD), cytochrome f and the Rieske protein, while the 4 small subunits are PetG, PetL, PetM and PetN. The complex functions as a dimer. Requires heme b as cofactor. Heme c is required as a cofactor.

Its subcellular location is the cellular thylakoid membrane. In terms of biological role, component of the cytochrome b6-f complex, which mediates electron transfer between photosystem II (PSII) and photosystem I (PSI), cyclic electron flow around PSI, and state transitions. The polypeptide is Cytochrome b6 (Crocosphaera subtropica (strain ATCC 51142 / BH68) (Cyanothece sp. (strain ATCC 51142))).